A 391-amino-acid polypeptide reads, in one-letter code: Immediate-early protein 2 (391 aa).

The protein belongs to the herpesviridae US22 family.

The protein localises to the host cytoplasm. The protein resides in the host nucleus. In terms of biological role, involved in the reactivation of latent MCMV in spleen cells. The protein is Immediate-early protein 2 (IE2) of Murid herpesvirus 1 (strain Smith) (MuHV-1).